Here is a 296-residue protein sequence, read N- to C-terminus: MKLKRYLLVAKPGIIFGNLIAVAGGYFLAARGSVEPMLLLATVIGLSLVVASGCVLNNCIDRDIDRHMERTRGRVTVTGQISLKAALAHGLVLGVAGFGLLWWRTNPLTTALAGFGYFVYVGLYSLWFKRRSQYGTLVGSLSGAMPPVVGYCAVTGQFDAGAASLLAIFCLWQMPHSYAIAIFRLKDYEAAGIPVLPVARGIAVTKIHIVLYILAFMAATLALCLGGYAGYGYLLVAVAVSLWWLAIALTGYWTADDRLWARKLFAFSIVAITALSVMMSIDFQVAPATHLVASLP.

The next 9 helical transmembrane spans lie at 7 to 27 (LLVAKPGIIFGNLIAVAGGYF), 36 to 56 (PMLLLATVIGLSLVVASGCVL), 83 to 103 (LKAALAHGLVLGVAGFGLLWW), 108 to 128 (LTTALAGFGYFVYVGLYSLWF), 134 to 154 (YGTLVGSLSGAMPPVVGYCAV), 163 to 183 (ASLLAIFCLWQMPHSYAIAIF), 207 to 227 (IHIVLYILAFMAATLALCLGG), 229 to 249 (AGYGYLLVAVAVSLWWLAIAL), and 265 to 285 (FAFSIVAITALSVMMSIDFQV).

The protein belongs to the UbiA prenyltransferase family. Protoheme IX farnesyltransferase subfamily.

The protein localises to the cell inner membrane. The catalysed reaction is heme b + (2E,6E)-farnesyl diphosphate + H2O = Fe(II)-heme o + diphosphate. Its pathway is porphyrin-containing compound metabolism; heme O biosynthesis; heme O from protoheme: step 1/1. Functionally, converts heme B (protoheme IX) to heme O by substitution of the vinyl group on carbon 2 of heme B porphyrin ring with a hydroxyethyl farnesyl side group. The sequence is that of Protoheme IX farnesyltransferase 2 from Pseudomonas paraeruginosa (strain DSM 24068 / PA7) (Pseudomonas aeruginosa (strain PA7)).